The chain runs to 141 residues: Terrelysin (141 aa).

The protein belongs to the aegerolysin family.

It is found in the cytoplasm. Hemolysins are potential virulence factors. Has hemolytic activity against sheep erythrocytes in vitro. This is Terrelysin from Aspergillus terreus (strain NIH 2624 / FGSC A1156).